Consider the following 344-residue polypeptide: S-adenosylmethionine:tRNA ribosyltransferase-isomerase (344 aa).

It belongs to the QueA family. As to quaternary structure, monomer.

It localises to the cytoplasm. It carries out the reaction 7-aminomethyl-7-carbaguanosine(34) in tRNA + S-adenosyl-L-methionine = epoxyqueuosine(34) in tRNA + adenine + L-methionine + 2 H(+). The protein operates within tRNA modification; tRNA-queuosine biosynthesis. Functionally, transfers and isomerizes the ribose moiety from AdoMet to the 7-aminomethyl group of 7-deazaguanine (preQ1-tRNA) to give epoxyqueuosine (oQ-tRNA). The sequence is that of S-adenosylmethionine:tRNA ribosyltransferase-isomerase from Pediococcus pentosaceus (strain ATCC 25745 / CCUG 21536 / LMG 10740 / 183-1w).